The chain runs to 98 residues: Large ribosomal subunit protein uL23 (98 aa).

It belongs to the universal ribosomal protein uL23 family. Part of the 50S ribosomal subunit. Contacts protein L29, and trigger factor when it is bound to the ribosome.

Functionally, one of the early assembly proteins it binds 23S rRNA. One of the proteins that surrounds the polypeptide exit tunnel on the outside of the ribosome. Forms the main docking site for trigger factor binding to the ribosome. The protein is Large ribosomal subunit protein uL23 of Clostridium acetobutylicum (strain ATCC 824 / DSM 792 / JCM 1419 / IAM 19013 / LMG 5710 / NBRC 13948 / NRRL B-527 / VKM B-1787 / 2291 / W).